We begin with the raw amino-acid sequence, 146 residues long: Hemoglobin subunit beta (146 aa).

Val1 carries the N-acetylvaline modification. One can recognise a Globin domain in the interval 2 to 146; it reads HLSGEEKTAL…VANALAHKYH (145 aa). Ser44 bears the Phosphoserine mark. Lys59 bears the N6-acetyllysine mark. A heme b-binding site is contributed by His63. Position 82 is an N6-acetyllysine (Lys82). His92 provides a ligand contact to heme b. An S-nitrosocysteine modification is found at Cys93. Lys144 is subject to N6-acetyllysine.

It belongs to the globin family. Heterotetramer of two alpha chains and two beta chains. Red blood cells.

Functionally, involved in oxygen transport from the lung to the various peripheral tissues. The polypeptide is Hemoglobin subunit beta (Tamiasciurus hudsonicus (American red squirrel)).